Reading from the N-terminus, the 168-residue chain is Probable deoxyuridine 5'-triphosphate nucleotidohydrolase (168 aa).

It belongs to the dCTP deaminase family. Archaeal dUTPase subfamily.

The catalysed reaction is dUTP + H2O = dUMP + diphosphate + H(+). It participates in pyrimidine metabolism; dUMP biosynthesis; dUMP from dCTP (dUTP route): step 2/2. This enzyme is involved in nucleotide metabolism: it produces dUMP, the immediate precursor of thymidine nucleotides and it decreases the intracellular concentration of dUTP so that uracil cannot be incorporated into DNA. The protein is Probable deoxyuridine 5'-triphosphate nucleotidohydrolase of Archaeoglobus fulgidus (strain ATCC 49558 / DSM 4304 / JCM 9628 / NBRC 100126 / VC-16).